The chain runs to 70 residues: Cold shock-like protein CspH (70 aa).

The CSD domain maps to 7–67 (GIVKTFDCKS…GLRGPTAANV (61 aa)).

It is found in the cytoplasm. In Salmonella typhi, this protein is Cold shock-like protein CspH (cspH).